A 369-amino-acid polypeptide reads, in one-letter code: Phospho-N-acetylmuramoyl-pentapeptide-transferase (369 aa).

The next 10 membrane-spanning stretches (helical) occupy residues isoleucine 2–phenylalanine 22, threonine 55–methionine 75, alanine 86–isoleucine 106, leucine 122–alanine 142, isoleucine 158–tryptophan 178, leucine 196–isoleucine 216, proline 239–tryptophan 259, isoleucine 266–leucine 286, leucine 291–valine 311, and isoleucine 348–leucine 368.

The protein belongs to the glycosyltransferase 4 family. MraY subfamily. The cofactor is Mg(2+).

The protein localises to the cell membrane. The catalysed reaction is UDP-N-acetyl-alpha-D-muramoyl-L-alanyl-gamma-D-glutamyl-meso-2,6-diaminopimeloyl-D-alanyl-D-alanine + di-trans,octa-cis-undecaprenyl phosphate = di-trans,octa-cis-undecaprenyl diphospho-N-acetyl-alpha-D-muramoyl-L-alanyl-D-glutamyl-meso-2,6-diaminopimeloyl-D-alanyl-D-alanine + UMP. It functions in the pathway cell wall biogenesis; peptidoglycan biosynthesis. Its function is as follows. Catalyzes the initial step of the lipid cycle reactions in the biosynthesis of the cell wall peptidoglycan: transfers peptidoglycan precursor phospho-MurNAc-pentapeptide from UDP-MurNAc-pentapeptide onto the lipid carrier undecaprenyl phosphate, yielding undecaprenyl-pyrophosphoryl-MurNAc-pentapeptide, known as lipid I. The protein is Phospho-N-acetylmuramoyl-pentapeptide-transferase of Arthrobacter sp. (strain FB24).